The chain runs to 469 residues: Neuraminidase (469 aa).

At 1 to 6 (MNPNQK) the chain is on the intravirion side. Residues 7–29 (IITIGSVSLTIATICFLMQIAIQ) form a helical membrane-spanning segment. Residues 11–33 (GSVSLTIATICFLMQIAIQVTTV) are involved in apical transport and lipid raft association. The Virion surface segment spans residues 30–469 (VTTVTLHFKQ…DGADINLMPI (440 aa)). The segment at 36–88 (HFKQYECDSPANNQVMPCEPIIIERNITEIVYLTNTTIEKEICPKLVEYRNWS) is hypervariable stalk region. N-linked (GlcNAc...) asparagine; by host glycans are attached at residues Asn-61, Asn-70, and Asn-86. Positions 91-469 (QCKITGFAPF…DGADINLMPI (379 aa)) are head of neuraminidase. 8 disulfide bridges follow: Cys-92-Cys-417, Cys-124-Cys-129, Cys-183-Cys-230, Cys-232-Cys-237, Cys-278-Cys-291, Cys-280-Cys-289, Cys-318-Cys-337, and Cys-421-Cys-447. Arg-118 contacts substrate. N-linked (GlcNAc...) asparagine; by host glycosylation occurs at Asn-146. Residue Asp-151 is the Proton donor/acceptor of the active site. Residue Arg-152 participates in substrate binding. Asn-200 and Asn-234 each carry an N-linked (GlcNAc...) asparagine; by host glycan. Residue 276–277 (EE) coordinates substrate. Arg-292 is a binding site for substrate. Ca(2+)-binding residues include Asp-293, Gly-297, and Asp-324. Residue Arg-371 participates in substrate binding. An N-linked (GlcNAc...) asparagine; by host glycan is attached at Asn-402. Tyr-406 serves as the catalytic Nucleophile.

The protein belongs to the glycosyl hydrolase 34 family. In terms of assembly, homotetramer. It depends on Ca(2+) as a cofactor. In terms of processing, N-glycosylated.

The protein localises to the virion membrane. The protein resides in the host apical cell membrane. It catalyses the reaction Hydrolysis of alpha-(2-&gt;3)-, alpha-(2-&gt;6)-, alpha-(2-&gt;8)- glycosidic linkages of terminal sialic acid residues in oligosaccharides, glycoproteins, glycolipids, colominic acid and synthetic substrates.. Its activity is regulated as follows. Inhibited by the neuraminidase inhibitors zanamivir (Relenza) and oseltamivir (Tamiflu). These drugs interfere with the release of progeny virus from infected cells and are effective against all influenza strains. Resistance to neuraminidase inhibitors is quite rare. Functionally, catalyzes the removal of terminal sialic acid residues from viral and cellular glycoconjugates. Cleaves off the terminal sialic acids on the glycosylated HA during virus budding to facilitate virus release. Additionally helps virus spread through the circulation by further removing sialic acids from the cell surface. These cleavages prevent self-aggregation and ensure the efficient spread of the progeny virus from cell to cell. Otherwise, infection would be limited to one round of replication. Described as a receptor-destroying enzyme because it cleaves a terminal sialic acid from the cellular receptors. May facilitate viral invasion of the upper airways by cleaving the sialic acid moieties on the mucin of the airway epithelial cells. Likely to plays a role in the budding process through its association with lipid rafts during intracellular transport. May additionally display a raft-association independent effect on budding. Plays a role in the determination of host range restriction on replication and virulence. Sialidase activity in late endosome/lysosome traffic seems to enhance virus replication. In Aves (whales), this protein is Neuraminidase.